A 253-amino-acid polypeptide reads, in one-letter code: 3-deoxy-manno-octulosonate cytidylyltransferase (253 aa).

The protein belongs to the KdsB family.

Its subcellular location is the cytoplasm. The catalysed reaction is 3-deoxy-alpha-D-manno-oct-2-ulosonate + CTP = CMP-3-deoxy-beta-D-manno-octulosonate + diphosphate. It functions in the pathway nucleotide-sugar biosynthesis; CMP-3-deoxy-D-manno-octulosonate biosynthesis; CMP-3-deoxy-D-manno-octulosonate from 3-deoxy-D-manno-octulosonate and CTP: step 1/1. It participates in bacterial outer membrane biogenesis; lipopolysaccharide biosynthesis. In terms of biological role, activates KDO (a required 8-carbon sugar) for incorporation into bacterial lipopolysaccharide in Gram-negative bacteria. The sequence is that of 3-deoxy-manno-octulosonate cytidylyltransferase from Aeromonas hydrophila subsp. hydrophila (strain ATCC 7966 / DSM 30187 / BCRC 13018 / CCUG 14551 / JCM 1027 / KCTC 2358 / NCIMB 9240 / NCTC 8049).